The sequence spans 130 residues: Small ribosomal subunit protein uS9 (130 aa).

Belongs to the universal ribosomal protein uS9 family.

The sequence is that of Small ribosomal subunit protein uS9 from Verminephrobacter eiseniae (strain EF01-2).